The chain runs to 305 residues: Aspartate carbamoyltransferase catalytic subunit (305 aa).

Residues Arg-51 and Thr-52 each contribute to the carbamoyl phosphate site. An L-aspartate-binding site is contributed by Lys-79. 3 residues coordinate carbamoyl phosphate: Arg-101, His-130, and Gln-133. Residues Arg-163 and Arg-215 each coordinate L-aspartate. 2 residues coordinate carbamoyl phosphate: Gly-256 and Pro-257.

It belongs to the aspartate/ornithine carbamoyltransferase superfamily. ATCase family. In terms of assembly, heterododecamer (2C3:3R2) of six catalytic PyrB chains organized as two trimers (C3), and six regulatory PyrI chains organized as three dimers (R2).

It carries out the reaction carbamoyl phosphate + L-aspartate = N-carbamoyl-L-aspartate + phosphate + H(+). It participates in pyrimidine metabolism; UMP biosynthesis via de novo pathway; (S)-dihydroorotate from bicarbonate: step 2/3. Catalyzes the condensation of carbamoyl phosphate and aspartate to form carbamoyl aspartate and inorganic phosphate, the committed step in the de novo pyrimidine nucleotide biosynthesis pathway. The sequence is that of Aspartate carbamoyltransferase catalytic subunit from Ehrlichia canis (strain Jake).